Consider the following 683-residue polypeptide: Probable metal-nicotianamine transporter YSL3 (683 aa).

The next 14 membrane-spanning stretches (helical) occupy residues 29–49 (LVTP…CFVG), 58–78 (IVPA…KWLI), 97–117 (MFLL…GFAT), 142–162 (HVPI…GVLI), 204–224 (VATI…QWFY), 265–285 (IVNF…YPFL), 309–329 (VFIS…TLIT), 372–392 (IPIP…TIAI), 404–424 (LAVL…ATGL), 448–468 (PGAV…LHIS), 490–510 (TGQI…FLAF), 553–573 (CMTF…VVLV), 595–615 (FFAG…LLAW), and 628–648 (SAVA…SALL).

This sequence belongs to the YSL (TC 2.A.67.2) family.

It is found in the membrane. Functionally, may be involved in the transport of nicotianamine-chelated metals. In Oryza sativa subsp. japonica (Rice), this protein is Probable metal-nicotianamine transporter YSL3 (YSL3).